A 432-amino-acid polypeptide reads, in one-letter code: Transcription factor E2F1 (432 aa).

Disordered stretches follow at residues 39–85 (DVGA…GRPP) and 98–126 (YLAG…KSRY). Positions 65–106 (ATPQAPRPAPSAPRPALGRPPVKRRLDLETDHQYLAGSSGPF) are cyclin A:CDK2 binding. Residues 87-189 (KRRLDLETDH…KKSKNHIQWL (103 aa)) form an interaction with BIRC2/c-IAP1 region. The DNA-binding element occupies 108–192 (GRGRHPGKGV…KNHIQWLGSR (85 aa)). N6-acetyllysine is present on residues Lys-115, Lys-118, and Lys-123. The tract at residues 151–172 (LNWAAEVLKVQKRRIYDITNVL) is leucine-zipper. A DEF box motif is present at residues 156–192 (EVLKVQKRRIYDITNVLEGIQLIAKKSKNHIQWLGSR). Position 183 is an N6-methyllysine; by SETD7 (Lys-183). The interval 190–377 (GSRTMVGIGQ…RLSPLVAADS (188 aa)) is required for interaction with TRIM28. A dimerization region spans residues 193–282 (TMVGIGQRLE…AVDSAETFQI (90 aa)). A disordered region spans residues 297–342 (PEESAEGISPGRTSYQETSGEDRNADSGTAGPPPSPPSTSPTLDPS). A transactivation region spans residues 363–432 (PMEEDRLSPL…DFGDLTPLDF (70 aa)). Ser-370 and Ser-398 each carry phosphoserine. The RB1 binding stretch occupies residues 404 to 421 (VDYHFGLEEGEGIRDLFD). Thr-428 is modified (phosphothreonine).

Belongs to the E2F/DP family. As to quaternary structure, component of the DRTF1/E2F transcription factor complex. Forms heterodimers with DP family members. The E2F1 complex binds specifically hypophosphorylated RB1, the interaction represses E2F1-driven transcription. During the cell cycle, RB1 becomes phosphorylated in mid-to-late G1 phase, detaches from the DRTF1/E2F complex, rendering E2F transcriptionally active. Interacts with TRRAP, which probably mediates its interaction with histone acetyltransferase complexes, leading to transcription activation. Binds TOPBP1 and EAPP. Interacts with ARID3A. Interacts with TRIM28; the interaction inhibits E2F1 acetylation through recruiting HDAC1 and represses its transcriptional activity. Interaction with KAT2B; the interaction acetylates E2F1 enhancing its DNA-binding and transcriptional activity. Interacts with BIRC2/c-IAP1 (via BIR domains). The complex TFDP1:E2F1 interacts with CEBPA; the interaction prevents CEBPA binding to target genes promoters and represses its transcriptional activity. Interacts with RRP1B. Interacts with HCFC1. Interacts with KMT2E; the interaction is probably indirect and is mediated via HCFC1. Interacts with DCAF5 and L3MBTL3; the interaction requires methylation at Lys-183 and is necessary to target E2F1 for ubiquitination by the CRL4-DCAF5 E3 ubiquitin ligase complex. Phosphorylated by CDK2 and cyclin A-CDK2 in the S-phase. Phosphorylation by CHEK2 stabilizes E2F1 upon DNA damage and regulates its effect on transcription and apoptosis. Phosphorylation at Ser-398 by GSK3B promotes interaction with USP11, leading to its deubiquitination and stabilization. In terms of processing, ubiquitinated via 'Lys-63'-linked ubiquitin, leading to its degradation. Deubiquitinated by USP11 following phosphorylation by GSK3B, promoting its stability. Post-translationally, acetylation stimulates DNA-binding. Enhanced under stress conditions such as DNA damage and inhibited by retinoblastoma protein RB1. Regulated by KAP1/TRIM28 which recruits HDAC1 to E2F1 resulting in deacetylation. Methylation at Lys-183 by SETD7 promotes E2F1 ubiquitin-dependent proteasomal degradation.

The protein localises to the nucleus. BIRC2/c-IAP1 stimulates its transcriptional activity. Functionally, transcription activator that binds DNA cooperatively with DP proteins through the E2 recognition site, 5'-TTTC[CG]CGC-3' found in the promoter region of a number of genes whose products are involved in cell cycle regulation or in DNA replication. The DRTF1/E2F complex functions in the control of cell-cycle progression from G1 to S phase. E2F1 binds preferentially RB1 in a cell-cycle dependent manner. It can mediate both cell proliferation and TP53/p53-dependent apoptosis. Blocks adipocyte differentiation by binding to specific promoters repressing CEBPA binding to its target gene promoters. Directly activates transcription of PEG10. Positively regulates transcription of RRP1B. The protein is Transcription factor E2F1 of Rattus norvegicus (Rat).